Here is a 161-residue protein sequence, read N- to C-terminus: Allophycocyanin alpha chain (161 aa).

Residue Asn71 is modified to N4-methylasparagine. Cys81 is a binding site for (2R,3E)-phycocyanobilin.

The protein belongs to the phycobiliprotein family. As to quaternary structure, heterodimer of an alpha and a beta chain. Contains one covalently linked phycocyanobilin chromophore.

It localises to the plastid. Its subcellular location is the chloroplast thylakoid membrane. Its function is as follows. Light-harvesting photosynthetic bile pigment-protein from the phycobiliprotein complex. Allophycocyanin has a maximum absorption at approximately 650 nanometers. In Cyanidium caldarium (Red alga), this protein is Allophycocyanin alpha chain (apcA).